The following is a 1169-amino-acid chain: Transcription-repair-coupling factor (1169 aa).

In terms of domain architecture, Helicase ATP-binding spans 634–795 (DMERARPMDR…MLGVRDLSVI (162 aa)). An ATP-binding site is contributed by 647-654 (GDVGYGKT). The DEEQ box motif lies at 748–751 (DEEQ). The 162-residue stretch at 809–970 (VLEQNTNFIK…GFKIAMRDLN (162 aa)) folds into the Helicase C-terminal domain.

The protein in the N-terminal section; belongs to the UvrB family. It in the C-terminal section; belongs to the helicase family. RecG subfamily.

Its subcellular location is the cytoplasm. Couples transcription and DNA repair by recognizing RNA polymerase (RNAP) stalled at DNA lesions. Mediates ATP-dependent release of RNAP and its truncated transcript from the DNA, and recruitment of nucleotide excision repair machinery to the damaged site. The chain is Transcription-repair-coupling factor from Staphylococcus epidermidis (strain ATCC 35984 / DSM 28319 / BCRC 17069 / CCUG 31568 / BM 3577 / RP62A).